Consider the following 389-residue polypeptide: Chalcone synthase 3 (389 aa).

Residue Cys164 is part of the active site.

Belongs to the thiolase-like superfamily. Chalcone/stilbene synthases family.

The catalysed reaction is (E)-4-coumaroyl-CoA + 3 malonyl-CoA + 3 H(+) = 2',4,4',6'-tetrahydroxychalcone + 3 CO2 + 4 CoA. Its pathway is secondary metabolite biosynthesis; flavonoid biosynthesis. Its function is as follows. The primary product of this enzyme is 4,2',4',6'-tetrahydroxychalcone (also termed naringenin-chalcone or chalcone) which can under specific conditions spontaneously isomerize into naringenin. The protein is Chalcone synthase 3 (CHS3) of Trifolium subterraneum (Subterranean clover).